The following is a 171-amino-acid chain: Myosin regulatory light chain 12B (171 aa).

The residue at position 18 (T18) is a Phosphothreonine; by MLCK and ZIPK/DAPK3. The residue at position 19 (S19) is a Phosphoserine; by MLCK and ZIPK/DAPK3. 3 EF-hand domains span residues S28–N63, D97–R132, and F133–D168. Residues D41, N43, D45, and D52 each coordinate Ca(2+).

In terms of assembly, myosin is a hexamer of 2 heavy chains and 4 light chains: interacts with myosin heavy chain MYO19. Phosphorylation increases the actin-activated myosin ATPase activity and thereby regulates the contractile activity. It is required to generate the driving force in the migration of the cells but not necessary for localization of myosin-2 at the leading edge. Phosphorylation is reduced following epigallocatechin-3-O-gallate treatment.

Functionally, myosin regulatory subunit that plays an important role in regulation of both smooth muscle and nonmuscle cell contractile activity via its phosphorylation. Phosphorylation triggers actin polymerization in vascular smooth muscle. Implicated in cytokinesis, receptor capping, and cell locomotion. This Bos taurus (Bovine) protein is Myosin regulatory light chain 12B (MYL12B).